Here is a 58-residue protein sequence, read N- to C-terminus: Metallothionein (58 aa).

The tract at residues Pro-1 to Ser-29 is beta. Residues Cys-4, Cys-5, Cys-10, Cys-12, Cys-17, Cys-21, Cys-23, Cys-26, Cys-28, Cys-31, Cys-34, Cys-38, Cys-40, Cys-46, Cys-50, Cys-54, Cys-56, and Cys-57 each coordinate a divalent metal cation. Residues Pro-30–Pro-58 are alpha.

In terms of biological role, metallothioneins have a high content of cysteine residues that bind various heavy metals. Class I MTS in crustacea are involved in the sequestration of elevated levels of heavy-metal ions. This chain is Metallothionein, found in Potamon potamios.